Reading from the N-terminus, the 437-residue chain is Lipid II isoglutaminyl synthase (glutamine-hydrolyzing) subunit MurT (437 aa).

Zn(2+)-binding residues include C202, C205, C224, and C226. Residue D349 is part of the active site.

Belongs to the MurCDEF family. MurT subfamily. In terms of assembly, forms a heterodimer with GatD.

The enzyme catalyses beta-D-GlcNAc-(1-&gt;4)-Mur2Ac(oyl-L-Ala-gamma-D-Glu-L-Lys-D-Ala-D-Ala)-di-trans,octa-cis-undecaprenyl diphosphate + L-glutamine + ATP + H2O = beta-D-GlcNAc-(1-&gt;4)-Mur2Ac(oyl-L-Ala-D-isoglutaminyl-L-Lys-D-Ala-D-Ala)-di-trans,octa-cis-undecaprenyl diphosphate + L-glutamate + ADP + phosphate + H(+). It catalyses the reaction beta-D-GlcNAc-(1-&gt;4)-Mur2Ac(oyl-L-Ala-gamma-D-Glu-L-Lys-D-Ala-D-Ala)-di-trans,octa-cis-undecaprenyl diphosphate + ATP = beta-D-GlcNAc-(1-&gt;4)-Mur2Ac(oyl-L-Ala-gamma-D-O-P-Glu-L-Lys-D-Ala-D-Ala)-di-trans,octa-cis-undecaprenyl diphosphate + ADP. It carries out the reaction beta-D-GlcNAc-(1-&gt;4)-Mur2Ac(oyl-L-Ala-gamma-D-O-P-Glu-L-Lys-D-Ala-D-Ala)-di-trans,octa-cis-undecaprenyl diphosphate + NH4(+) = beta-D-GlcNAc-(1-&gt;4)-Mur2Ac(oyl-L-Ala-D-isoglutaminyl-L-Lys-D-Ala-D-Ala)-di-trans,octa-cis-undecaprenyl diphosphate + phosphate + H(+). It functions in the pathway cell wall biogenesis; peptidoglycan biosynthesis. In terms of biological role, the lipid II isoglutaminyl synthase complex catalyzes the formation of alpha-D-isoglutamine in the cell wall lipid II stem peptide. The MurT subunit catalyzes the ATP-dependent amidation of D-glutamate residue of lipid II, converting it to an isoglutamine residue. This Staphylococcus aureus (strain COL) protein is Lipid II isoglutaminyl synthase (glutamine-hydrolyzing) subunit MurT.